Consider the following 1202-residue polypeptide: DNA-directed RNA polymerase subunit beta (1202 aa).

Residues 1154–1202 (NMDEDDDEVVNVDALAKYAEEHKADDKKNEEENKSEATSTTTDDKTNQN) form a disordered region. The segment covering 1171 to 1188 (YAEEHKADDKKNEEENKS) has biased composition (basic and acidic residues).

This sequence belongs to the RNA polymerase beta chain family. As to quaternary structure, the RNAP catalytic core consists of 2 alpha, 1 beta, 1 beta' and 1 omega subunit. When a sigma factor is associated with the core the holoenzyme is formed, which can initiate transcription.

It catalyses the reaction RNA(n) + a ribonucleoside 5'-triphosphate = RNA(n+1) + diphosphate. Its function is as follows. DNA-dependent RNA polymerase catalyzes the transcription of DNA into RNA using the four ribonucleoside triphosphates as substrates. This Limosilactobacillus reuteri (strain DSM 20016) (Lactobacillus reuteri) protein is DNA-directed RNA polymerase subunit beta.